Here is a 1943-residue protein sequence, read N- to C-terminus: Protocadherin-15 (1943 aa).

The N-terminal stretch at 1 to 26 (MFLQFAVWKCLPHGILIASLLVVSWG) is a signal peptide. The Extracellular segment spans residues 27–1381 (QYDDDWQYED…GESLGYTEGA (1355 aa)). C37 and C125 are disulfide-bonded. Cadherin domains lie at 45–152 (PATI…SPTF), 153–270 (KHES…GPMF), 283–400 (RPLT…SPYF), 401–514 (TMPS…TPTF), 515–621 (PEIS…PPRF), 622–722 (PQLM…APVF), 724–824 (PYLP…SPVF), 825–931 (TNST…PPVF), 932–1040 (SKRI…IPRF), 1042–1149 (QEEY…PPVF), and 1150–1264 (QKKF…PPTL). Residues N57, N102, and N206 are each glycosylated (N-linked (GlcNAc...) asparagine). Residues N424, N564, N667, N729, N773, N826, and N856 are each glycosylated (N-linked (GlcNAc...) asparagine). N-linked (GlcNAc...) asparagine glycosylation is found at N1069, N1089, and N1180. The chain crosses the membrane as a helical span at residues 1382 to 1402 (LLALAFIIILCCIPAILVVLV). Residues 1403-1943 (SYRQFKVRQA…VQPHSQSTSL (541 aa)) are Cytoplasmic-facing. Disordered regions lie at residues 1425–1453 (PAAK…AHLY), 1475–1533 (GNNS…STHN), and 1714–1865 (ILNS…EPHR). Positions 1431–1449 (APVPAAPAPPPPPPPPPPG) are enriched in pro residues. Basic and acidic residues-rich tracts occupy residues 1480 to 1489 (PEDRSSHRDG) and 1498 to 1509 (ESHEPAHVEGPL). Composition is skewed to pro residues over residues 1742-1760 (PHPP…PRPP) and 1769-1779 (PLSPPNPPPPQ). Positions 1784–1795 (SLPISTPPTSSL) are enriched in low complexity. A compositionally biased stretch (pro residues) spans 1796–1821 (PLPPPLSLPPPPRPPAPRLFPQPPST). A compositionally biased stretch (low complexity) spans 1822 to 1834 (SIPSTDSISAPAA). A compositionally biased stretch (polar residues) spans 1846-1858 (TTSTTQPPASNPQ).

Antiparallel heterodimer with CDH23. Found in a complex with TMIE and LHFPL5. Interacts with LHFPL5/TMHS; this interaction is required for efficient localization to hair bundles. Interacts with MYO7A. Interacts with USH1G; this interaction may recruit USH1G to the plasma membrane. Interacts with TOMT. Isoforms CD1 and CD3 interact with TMC1 (via N-terminus) and TMC2 (via N-terminus). Interacts with PIEZO1. Expressed in brain and sensory epithelium of the developing inner ear. Expressed in the retina, in the photoreceptor inner segments, the outer plexiform layer, the inner nuclei layer and the ganglion cell layer and, more diffusely in the inner plexiform layer (at protein level). Not detected in the retinal pigment epithelium (at protein level). Expressed in the spleen, dorsal root ganglion, dorsal aspect of neural tube, floor plate and ependymal cells adjacent to the neural canal.

Its subcellular location is the cell membrane. The protein resides in the secreted. Functionally, calcium-dependent cell-adhesion protein. Required for inner ear neuroepithelial cell elaboration and cochlear function. Probably involved in the maintenance of normal retinal function. The protein is Protocadherin-15 (Pcdh15) of Mus musculus (Mouse).